Reading from the N-terminus, the 341-residue chain is tRNA N6-adenosine threonylcarbamoyltransferase (341 aa).

His111 and His115 together coordinate Fe cation. Residues 134 to 138 (LVSGG), Asp167, Gly180, and Asn276 each bind substrate. Residue Asp304 participates in Fe cation binding.

The protein belongs to the KAE1 / TsaD family. The cofactor is Fe(2+).

It is found in the cytoplasm. It catalyses the reaction L-threonylcarbamoyladenylate + adenosine(37) in tRNA = N(6)-L-threonylcarbamoyladenosine(37) in tRNA + AMP + H(+). Required for the formation of a threonylcarbamoyl group on adenosine at position 37 (t(6)A37) in tRNAs that read codons beginning with adenine. Is involved in the transfer of the threonylcarbamoyl moiety of threonylcarbamoyl-AMP (TC-AMP) to the N6 group of A37, together with TsaE and TsaB. TsaD likely plays a direct catalytic role in this reaction. The sequence is that of tRNA N6-adenosine threonylcarbamoyltransferase from Pseudomonas putida (strain W619).